A 120-amino-acid polypeptide reads, in one-letter code: Large ribosomal subunit protein bL36m (120 aa).

The protein belongs to the bacterial ribosomal protein bL36 family. As to quaternary structure, component of the mitochondrial ribosome large subunit (39S) which comprises a 16S rRNA and about 50 distinct proteins.

Its subcellular location is the mitochondrion. This Osmerus mordax (Rainbow smelt) protein is Large ribosomal subunit protein bL36m (mrpl36).